Reading from the N-terminus, the 399-residue chain is Ectoine hydrolase (399 aa).

Belongs to the peptidase M24 family.

It localises to the cytoplasm. It catalyses the reaction L-ectoine + H2O = (2S)-2-acetamido-4-aminobutanoate. Functionally, involved in the degradation of ectoine, which allows H.elongata to utilize ectoine as both a carbon and a nitrogen source for growth. Catalyzes the hydrolysis of ectoine to N-acetyl-L-2,4-diaminobutyric acid (N-Ac-DABA). It can produce both isoforms N-gamma-acetyl-L-2,4-diaminobutyric acid (N-gamma-Ac-DABA) and N-alpha-acetyl-L-2,4-diaminobutyric acid (-Nalpha-Ac-DABA), however N-alpha-Ac-DABA is the essential substrate for the subsequent catabolic enzyme DoeB. The polypeptide is Ectoine hydrolase (Halomonas elongata (strain ATCC 33173 / DSM 2581 / NBRC 15536 / NCIMB 2198 / 1H9)).